We begin with the raw amino-acid sequence, 445 residues long: GTPase Der (445 aa).

EngA-type G domains are found at residues 3–167 (PVIA…YAGQ) and 180–353 (IKIA…AAAM). Residues 9–16 (GRPNVGKS), 56–60 (DTGGF), 119–122 (NKAE), 186–193 (GRPNVGKS), 233–237 (DTAGL), and 298–301 (NKWD) each bind GTP. Residues 354 to 438 (AKLPTPKLTR…PLRIEFRSSN (85 aa)) enclose the KH-like domain.

It belongs to the TRAFAC class TrmE-Era-EngA-EngB-Septin-like GTPase superfamily. EngA (Der) GTPase family. In terms of assembly, associates with the 50S ribosomal subunit.

GTPase that plays an essential role in the late steps of ribosome biogenesis. This Burkholderia vietnamiensis (strain G4 / LMG 22486) (Burkholderia cepacia (strain R1808)) protein is GTPase Der.